We begin with the raw amino-acid sequence, 693 residues long: Subtilisin-like protease SBT4.10 (693 aa).

Residues 1–25 (MAKLREASFCALACVLVLFLSFVSA) form the signal peptide. The propeptide at 26–113 (DTYNRQDKQV…VFPSKKYKLH (88 aa)) is activation peptide. Residues 35–113 (VYVVYMGSLP…VFPSKKYKLH (79 aa)) enclose the Inhibitor I9 domain. The 420-residue stretch at 117-536 (SWDFMGLKEG…SGHIDPIAAI (420 aa)) folds into the Peptidase S8 domain. Asp-145 (charge relay system) is an active-site residue. N-linked (GlcNAc...) asparagine glycosylation is present at Asn-176. His-200 (charge relay system) is an active-site residue. N-linked (GlcNAc...) asparagine glycosylation is found at Asn-215, Asn-223, Asn-368, Asn-413, and Asn-467. Residues 354–396 (QYPLVYETSVEKCNNESLTTLALSFLTLTPQSNEQIISMFHTL) form the PA domain. Ser-475 functions as the Charge relay system in the catalytic mechanism. N-linked (GlcNAc...) asparagine glycosylation is found at Asn-559, Asn-603, and Asn-613.

The protein belongs to the peptidase S8 family. Post-translationally, the C-terminal propeptide is autocleaved.

The protein localises to the secreted. This chain is Subtilisin-like protease SBT4.10, found in Arabidopsis thaliana (Mouse-ear cress).